Reading from the N-terminus, the 935-residue chain is Intimin (935 aa).

The first 41 residues, 1 to 41 (MITHGFYARTRHKHKLKKTFIMLSAGLGLFFYVNQNSFANG), serve as a signal peptide directing secretion. Residues 40-153 (NGENYFKLSS…KMTKMSPDAT (114 aa)) are peptidoglycan-binding. The tract at residues 40 to 153 (NGENYFKLSS…KMTKMSPDAT (114 aa)) is sufficient for homodimerization. The tract at residues 40 to 212 (NGENYFKLSS…LQAWLQHYGT (173 aa)) is required for periplasmic localization. Residues 63–112 (LFYTLKTGETVSSISKSQGISLSVIWSLNKHLYSSESEMLKAAPGQQIIL) enclose the LysM domain. The interval 210-411 (YGTAEVNLQS…LYSMQFRYQF (202 aa)) is inverse autotransporter. Positions 402 to 411 (LYSMQFRYQF) are signature sequence for beta-barrel assembly machinery (BAM), which recognizes the unfolded beta-barrel in the periplasm. Big-1 domains lie at 560-653 (VTDF…VIFV) and 660-754 (ITEI…VTFF). Residues 790–834 (GGNGTYSWHSENTNIATVDESGKVTLKGKGTAVINVTSGDKQTVS) enclose the BIG2 domain. A disulfide bond links Cys859 and Cys933.

The protein belongs to the intimin/invasin family. In terms of assembly, homodimer. Interacts with Tir.

The protein resides in the cell outer membrane. Its function is as follows. An inverse autotransporter. Adhesin, which mediates attachment to the human intestine epithelial cells. Necessary for the production of attaching and effacing lesions on infected human tissue culture cells. Anchored to the outer membrane by binding to peptidoglycan (PGN) via its periplasmic domain, thus helping in receptor interactions during host invasion. PGN-binding may also aid in resisting mechanical and chemical stress during transit of the bacterium through the gastrointestinal tract of the host. The protein is Intimin (eae) of Escherichia coli O111:H-.